Consider the following 633-residue polypeptide: Guanylate-binding protein 6 (633 aa).

Residues 1–310 form a GTPase domain (Globular) region; the sequence is MESGPKMLAP…EAINSGAVPC (310 aa). Positions 35 to 277 constitute a GB1/RHD3-type G domain; it reads SQPVVVVAIV…FCSYIFTHAR (243 aa). GTP is bound by residues 45–52, 67–69, and 97–101; these read GLYRTGKS, LGS, and DTEGL.

It belongs to the TRAFAC class dynamin-like GTPase superfamily. GB1/RHD3 GTPase family. GB1 subfamily. (Microbial infection) Ubiquitinated by S.flexneri IpaH9.8, leading to its degradation by the proteasome, thereby preventing its ability to promote host defense against bacterial infection.

Its subcellular location is the cytoplasmic vesicle. It catalyses the reaction GTP + H2O = GDP + phosphate + H(+). Interferon (IFN)-inducible GTPase that plays important roles in innate immunity against a diverse range of bacterial, viral and protozoan pathogens, such as bacterial pathogens Listeria monocytogenes and Mycobacterium bovis BCG as well as the protozoan pathogen Toxoplasma gondii. Confers protection to several pathogens, including the bacterial pathogens Listeria monocytogenes and Mycobacterium bovis BCG as well as the protozoan pathogen Toxoplasma gondii. This is Guanylate-binding protein 6 (GBP6) from Homo sapiens (Human).